The chain runs to 266 residues: Phosphatidylglycerol--prolipoprotein diacylglyceryl transferase (266 aa).

7 helical membrane-spanning segments follow: residues 10 to 30 (VALAIGPLKIHWYGLMYLIGI), 56 to 76 (LVFWVACGVILGGRLGYVLFY), 92 to 112 (WKGGMSFHGGLLGVMLAVWWF), 120 to 140 (FFQLMDFIAPLVPIGLGAGRI), 171 to 191 (PSQLYQFALEGVALFVILWLF), 199 to 219 (ASVSGLFVLCYGIFRFVVEFV), and 233 to 253 (WLTMGQVLCVPMVLAGIALMV). R139 is a binding site for a 1,2-diacyl-sn-glycero-3-phospho-(1'-sn-glycerol).

It belongs to the Lgt family.

It is found in the cell inner membrane. The catalysed reaction is L-cysteinyl-[prolipoprotein] + a 1,2-diacyl-sn-glycero-3-phospho-(1'-sn-glycerol) = an S-1,2-diacyl-sn-glyceryl-L-cysteinyl-[prolipoprotein] + sn-glycerol 1-phosphate + H(+). It functions in the pathway protein modification; lipoprotein biosynthesis (diacylglyceryl transfer). Its function is as follows. Catalyzes the transfer of the diacylglyceryl group from phosphatidylglycerol to the sulfhydryl group of the N-terminal cysteine of a prolipoprotein, the first step in the formation of mature lipoproteins. The sequence is that of Phosphatidylglycerol--prolipoprotein diacylglyceryl transferase from Pseudomonas paraeruginosa (strain DSM 24068 / PA7) (Pseudomonas aeruginosa (strain PA7)).